A 456-amino-acid polypeptide reads, in one-letter code: MEGSWFHRKRFSFYLLLGFLLQGRGVTFTINCSGFGQHGADPTALNSVFNRKPFRPVTNISVPTQVNISFAMSAILDVNEQLHLLSSFLWLEMVWDNPFISWNPEECEGITKMSMAAKNLWLPDIFIIELMDVDKTPKGLTAYVSNEGRIRYKKPMKVDSICNLDIFYFPFDQQNCTLTFSSFLYTVDSMLLDMEKEVWEITDASRNILQTHGEWELLGLSKATAKLSRGGNLYDQIVFYVAIRRRPSLYVINLLVPSGFLVAIDALSFYLPVKSGNRVPFKITLLLGYNVFLLMMSDLLPTSGTPLIGVYFALCLSLMVGSLLETIFITHLLHVATTQPPPLPRWLHSLLLHCNSPGRCCPTAPQKENKGPGLTPTHLPGVKEPEVSAGQMPGPAEAELTGGSEWTRAQREHEAQKQHSVELWLQFSHAMDAMLFRLYLLFMASSIITVICLWNT.

An N-terminal signal peptide occupies residues Met1 to Gly25. The Extracellular segment spans residues Val26 to Ser248. Cysteines 162 and 176 form a disulfide. An N-linked (GlcNAc...) asparagine glycan is attached at Asn175. A helical membrane pass occupies residues Leu249–Phe269. The Cytoplasmic segment spans residues Tyr270–Lys282. A helical transmembrane segment spans residues Ile283–Ser303. The Extracellular portion of the chain corresponds to Gly304–Leu307. Residues Ile308–Phe328 traverse the membrane as a helical segment. At Ile329–Ala433 the chain is on the cytoplasmic side. The segment at Thr401–Asp432 is HA-stretch; determines single-channel conductance in 5-HT3 receptors. A helical transmembrane segment spans residues Met434–Trp454. Topologically, residues Asn455–Thr456 are extracellular.

It belongs to the ligand-gated ion channel (TC 1.A.9) family. 5-hydroxytryptamine receptor (TC 1.A.9.2) subfamily. HTR3E sub-subfamily. As to quaternary structure, forms homopentameric as well as heteropentameric serotonin-activated cation-selective channel complexes with HTR3A. The homomeric complex is not functional. Heteropentameric complexes display properties which resemble that of neuronal serotonin-activated channels in vivo. Expressed in adult colon and intestine.

It localises to the postsynaptic cell membrane. Its subcellular location is the cell membrane. It catalyses the reaction Na(+)(in) = Na(+)(out). It carries out the reaction K(+)(in) = K(+)(out). The enzyme catalyses Ca(2+)(in) = Ca(2+)(out). Forms serotonin (5-hydroxytryptamine/5-HT3)-activated cation-selective channel complexes, which when activated cause fast, depolarizing responses in neurons. The sequence is that of 5-hydroxytryptamine receptor 3E from Homo sapiens (Human).